The primary structure comprises 202 residues: N-(5'-phosphoribosyl)anthranilate isomerase (202 aa).

This sequence belongs to the TrpF family.

It carries out the reaction N-(5-phospho-beta-D-ribosyl)anthranilate = 1-(2-carboxyphenylamino)-1-deoxy-D-ribulose 5-phosphate. The protein operates within amino-acid biosynthesis; L-tryptophan biosynthesis; L-tryptophan from chorismate: step 3/5. The polypeptide is N-(5'-phosphoribosyl)anthranilate isomerase (Listeria monocytogenes serotype 4b (strain CLIP80459)).